A 121-amino-acid polypeptide reads, in one-letter code: Large ribosomal subunit protein bL12 (121 aa).

It belongs to the bacterial ribosomal protein bL12 family. As to quaternary structure, homodimer. Part of the ribosomal stalk of the 50S ribosomal subunit. Forms a multimeric L10(L12)X complex, where L10 forms an elongated spine to which 2 to 4 L12 dimers bind in a sequential fashion. Binds GTP-bound translation factors.

Its function is as follows. Forms part of the ribosomal stalk which helps the ribosome interact with GTP-bound translation factors. Is thus essential for accurate translation. In Clostridioides difficile (strain 630) (Peptoclostridium difficile), this protein is Large ribosomal subunit protein bL12.